The chain runs to 114 residues: Vesicle-associated membrane protein 2 (114 aa).

The segment covering 1-11 has biased composition (pro residues); that stretch reads MSAPAAGPPAA. The interval 1–31 is disordered; that stretch reads MSAPAAGPPAAAPGDGAPQGPPNLTSNRRLQ. At serine 2 the chain carries N-acetylserine. The Cytoplasmic segment spans residues 2–92; that stretch reads SAPAAGPPAA…KRKYWWKNMK (91 aa). In terms of domain architecture, v-SNARE coiled-coil homology spans 29 to 89; it reads RLQQTQAQVD…AKLKRKYWWK (61 aa). The helical; Anchor for type IV membrane protein transmembrane segment at 93 to 111 threads the bilayer; that stretch reads MMIIMGVICAIILIIIIVY. Residues 112–114 lie on the Vesicular side of the membrane; that stretch reads FST.

It belongs to the synaptobrevin family.

The protein resides in the cytoplasmic vesicle. Its subcellular location is the secretory vesicle. It is found in the synaptic vesicle membrane. It localises to the cell membrane. Functionally, involved in the targeting and/or fusion of transport vesicles to their target membrane. Major SNARE protein of synaptic vesicles which mediates fusion of synaptic vesicles to release neurotransmitters. Essential for fast vesicular exocytosis and activity-dependent neurotransmitter release as well as fast endocytosis that mediates rapid reuse of synaptic vesicles. This Xenopus laevis (African clawed frog) protein is Vesicle-associated membrane protein 2 (vamp2).